We begin with the raw amino-acid sequence, 124 residues long: uncharacterized protein (124 aa).

The segment at 82 to 124 (SDLGIEGGERAQGQNAHSVHGPGLQTERGGSQLQMVGHPLREL) is disordered.

This is an uncharacterized protein from Human cytomegalovirus (strain AD169) (HHV-5).